Reading from the N-terminus, the 296-residue chain is Probable cell wall protein PGA41 (296 aa).

Positions 1–18 (MKFTIVLFTLISVTVAAA) are cleaved as a signal peptide. Residues 146–212 (IASSTKESSS…ITTISSDSST (67 aa)) show a composition bias toward low complexity. Residues 146–276 (IASSTKESSS…PNSSQTAPGA (131 aa)) form a disordered region. Positions 220–245 (QGGGGNSGNNGSNGDGGNDASGGGGV) are enriched in gly residues. N229 and N268 each carry an N-linked (GlcNAc...) asparagine glycan. Low complexity predominate over residues 247-274 (NENEQASSPPSSQSSTNSNQPNSSQTAP). The GPI-anchor amidated glycine moiety is linked to residue G275. Residues 276-296 (AANYLSSVSVGTLMILVLGLI) constitute a propeptide, removed in mature form.

The protein belongs to the IHD1 family. Post-translationally, the GPI-anchor is attached to the protein in the endoplasmic reticulum and serves to target the protein to the cell surface. There, the glucosamine-inositol phospholipid moiety is cleaved off and the GPI-modified mannoprotein is covalently attached via its lipidless GPI glycan remnant to the 1,6-beta-glucan of the outer cell wall layer.

The protein resides in the secreted. It localises to the cell wall. It is found in the membrane. Its function is as follows. Probable GPI-anchored cell wall protein that may be involved in cell wall organization, hyphal growth, as well as in virulence. The protein is Probable cell wall protein PGA41 (PGA41) of Candida albicans (strain SC5314 / ATCC MYA-2876) (Yeast).